Reading from the N-terminus, the 159-residue chain is CASP-like protein 5C1 (159 aa).

Residues 1 to 6 are Cytoplasmic-facing; that stretch reads MDNGDR. A helical membrane pass occupies residues 7–29; that stretch reads SGAGAGAVGSAGSLGLRVGQAVF. The Extracellular portion of the chain corresponds to 30–48; that stretch reads SSASLLFMSVGVEFFSYTA. Residues 49 to 69 traverse the membrane as a helical segment; it reads FCFLVTIMGLVIPWSCTLAMI. Residues 70–94 lie on the Cytoplasmic side of the membrane; it reads DVYSVFVGCPLRVPGVMVIVVVGDC. A helical membrane pass occupies residues 95 to 117; it reads ALSIVSFAAACSSAAVIDLLLQL. Residues 118–134 lie on the Extracellular side of the membrane; it reads HGSHSSPTFCGRYQLSA. The chain crosses the membrane as a helical span at residues 135–155; the sequence is MMAFLSWLLMAASATFNLWFV. Residues 156–159 are Cytoplasmic-facing; it reads ASRW.

It belongs to the Casparian strip membrane proteins (CASP) family. Homodimer and heterodimers.

Its subcellular location is the cell membrane. The chain is CASP-like protein 5C1 from Zea mays (Maize).